An 859-amino-acid chain; its full sequence is Protein EFR3 homolog (859 aa).

Polar residues predominate over residues 696–714; it reads RKNDGSGDQWQNDTPNFDS. Residues 696-728 are disordered; the sequence is RKNDGSGDQWQNDTPNFDSTDGRESPSGYKTVG.

The protein belongs to the EFR3 family.

The chain is Protein EFR3 homolog from Caenorhabditis elegans.